The primary structure comprises 282 residues: Energy-coupling factor transporter ATP-binding protein EcfA1 (282 aa).

In terms of domain architecture, ABC transporter spans 9 to 243 (IEIDNLSFKY…NDELLNIGLD (235 aa)). 43 to 50 (GHNGSGKS) contacts ATP.

It belongs to the ABC transporter superfamily. Energy-coupling factor EcfA family. As to quaternary structure, forms a stable energy-coupling factor (ECF) transporter complex composed of 2 membrane-embedded substrate-binding proteins (S component), 2 ATP-binding proteins (A component) and 2 transmembrane proteins (T component).

It is found in the cell membrane. In terms of biological role, ATP-binding (A) component of a common energy-coupling factor (ECF) ABC-transporter complex. Unlike classic ABC transporters this ECF transporter provides the energy necessary to transport a number of different substrates. The polypeptide is Energy-coupling factor transporter ATP-binding protein EcfA1 (Ligilactobacillus salivarius (strain UCC118) (Lactobacillus salivarius)).